We begin with the raw amino-acid sequence, 371 residues long: Pyruvate dehydrogenase E1 component subunit alpha (371 aa).

In terms of assembly, heterodimer of an alpha and a beta chain. Requires thiamine diphosphate as cofactor.

It catalyses the reaction N(6)-[(R)-lipoyl]-L-lysyl-[protein] + pyruvate + H(+) = N(6)-[(R)-S(8)-acetyldihydrolipoyl]-L-lysyl-[protein] + CO2. The pyruvate dehydrogenase complex catalyzes the overall conversion of pyruvate to acetyl-CoA and CO(2). It contains multiple copies of three enzymatic components: pyruvate dehydrogenase (E1), dihydrolipoamide acetyltransferase (E2) and lipoamide dehydrogenase (E3). The chain is Pyruvate dehydrogenase E1 component subunit alpha from Bacillus cereus.